The following is a 460-amino-acid chain: Cysteine--tRNA ligase (460 aa).

C28 contacts Zn(2+). Positions 30-40 match the 'HIGH' region motif; the sequence is VTIYDLCHIGH. The Zn(2+) site is built by C209, H234, and E238. A 'KMSKS' region motif is present at residues 266-270; sequence KMSKS. K269 provides a ligand contact to ATP.

This sequence belongs to the class-I aminoacyl-tRNA synthetase family. Monomer. The cofactor is Zn(2+).

Its subcellular location is the cytoplasm. It carries out the reaction tRNA(Cys) + L-cysteine + ATP = L-cysteinyl-tRNA(Cys) + AMP + diphosphate. This chain is Cysteine--tRNA ligase, found in Vibrio vulnificus (strain YJ016).